The following is a 764-amino-acid chain: uncharacterized protein (764 aa).

At 1-646 the chain is on the lumenal side; the sequence is MKEENGFAGF…LTKLYTFPFT (646 aa). Residues 22–173 are disordered; that stretch reads LNDTAPTKSQ…SAITAPSRKV (152 aa). Asn23 carries an N-linked (GlcNAc...) asparagine glycan. Composition is skewed to polar residues over residues 25–41 and 61–82; these read TAPTKSQSLKNGVNNEG and SEASSHSTLGQQQARDGRQSPS. Ser80 carries the post-translational modification Phosphoserine. The span at 98–113 shows a compositional bias: acidic residues; the sequence is ENQENEADEAENEETS. Asn118 carries an N-linked (GlcNAc...) asparagine glycan. A compositionally biased stretch (basic and acidic residues) spans 118 to 145; sequence NHTENTEEIAEESRPLERTHSGSNHHEA. The span at 158 to 173 shows a compositional bias: polar residues; the sequence is NTLSQGSAITAPSRKV. The region spanning 197-264 is the GRAM domain; it reads RDFHRIFKVL…TEIVSVEKKS (68 aa). 2 N-linked (GlcNAc...) asparagine glycosylation sites follow: Asn240 and Asn330. Residues 320-406 are disordered; it reads ASGNHHSGSS…DGNSVKKMNE (87 aa). Residues 321-330 show a composition bias toward low complexity; the sequence is SGNHHSGSSN. The segment covering 331 to 340 has biased composition (polar residues); the sequence is QSINADSSAG. A compositionally biased stretch (acidic residues) spans 352–371; the sequence is ANDESSEDDDEDNNTDEANE. N-linked (GlcNAc...) asparagine glycosylation is found at Asn364 and Asn376. Positions 389-399 are enriched in polar residues; that stretch reads HSDNVVLSDGN. The VASt domain occupies 432–598; that stretch reads LAHVLCSDVV…AFENYKVSPK (167 aa). N-linked (GlcNAc...) asparagine glycosylation is found at Asn442 and Asn554. The span at 598-613 shows a compositional bias: basic residues; sequence KGRRKKITKHTKKKNK. The tract at residues 598 to 626 is disordered; that stretch reads KGRRKKITKHTKKKNKHASETSVAPEKVD. Asn627 is a glycosylation site (N-linked (GlcNAc...) asparagine). A helical transmembrane segment spans residues 647-667; it reads IITWLMHPTHLLLVVMFSMLV. Over 668–764 the chain is Cytoplasmic; the sequence is LQWWYMQQIL…LRKLEASGYI (97 aa).

Belongs to the YSP2 family.

The protein localises to the membrane. This is an uncharacterized protein from Schizosaccharomyces pombe (strain 972 / ATCC 24843) (Fission yeast).